The primary structure comprises 366 residues: Endogenous Bornavirus-like nucleoprotein 1 (366 aa).

Over residues 1–15 the composition is skewed to polar residues; it reads MSRPRNNPQTSSPQD. A disordered region spans residues 1–22; the sequence is MSRPRNNPQTSSPQDSTKDGSS.

In terms of tissue distribution, expression detected by RT-PCR in a few cell lines, including OL, HEK293T and MOLT-4. Not observed in HeLa cells.

May act as an RNA-binding protein. Highly homologous to the bornavirus nucleocapsid N protein that binds viral RNA and oligomerizes. The chain is Endogenous Bornavirus-like nucleoprotein 1 (EBLN1) from Homo sapiens (Human).